The sequence spans 373 residues: Glutamate 5-kinase 2 (373 aa).

Lys-11 provides a ligand contact to ATP. Residues Ser-51, Asp-138, and Asn-150 each contribute to the substrate site. Residues 170–171 (SD) and 212–218 (TGGMKSK) contribute to the ATP site. Residues 279–355 (EGDIVVHNES…TNQETAASSQ (77 aa)) enclose the PUA domain.

This sequence belongs to the glutamate 5-kinase family.

Its subcellular location is the cytoplasm. The enzyme catalyses L-glutamate + ATP = L-glutamyl 5-phosphate + ADP. It functions in the pathway amino-acid biosynthesis; L-proline biosynthesis; L-glutamate 5-semialdehyde from L-glutamate: step 1/2. Catalyzes the transfer of a phosphate group to glutamate to form L-glutamate 5-phosphate. The sequence is that of Glutamate 5-kinase 2 from Bacillus licheniformis (strain ATCC 14580 / DSM 13 / JCM 2505 / CCUG 7422 / NBRC 12200 / NCIMB 9375 / NCTC 10341 / NRRL NRS-1264 / Gibson 46).